The chain runs to 133 residues: Small ribosomal subunit protein uS8 (133 aa).

This sequence belongs to the universal ribosomal protein uS8 family. In terms of assembly, part of the 30S ribosomal subunit. Contacts proteins S5 and S12.

In terms of biological role, one of the primary rRNA binding proteins, it binds directly to 16S rRNA central domain where it helps coordinate assembly of the platform of the 30S subunit. In Prochlorococcus marinus subsp. pastoris (strain CCMP1986 / NIES-2087 / MED4), this protein is Small ribosomal subunit protein uS8.